Reading from the N-terminus, the 263-residue chain is Ribosomal RNA small subunit methyltransferase A (263 aa).

S-adenosyl-L-methionine-binding residues include I18, G43, E65, D91, and N110.

This sequence belongs to the class I-like SAM-binding methyltransferase superfamily. rRNA adenine N(6)-methyltransferase family. RsmA subfamily.

It is found in the cytoplasm. The enzyme catalyses adenosine(1518)/adenosine(1519) in 16S rRNA + 4 S-adenosyl-L-methionine = N(6)-dimethyladenosine(1518)/N(6)-dimethyladenosine(1519) in 16S rRNA + 4 S-adenosyl-L-homocysteine + 4 H(+). Specifically dimethylates two adjacent adenosines (A1518 and A1519) in the loop of a conserved hairpin near the 3'-end of 16S rRNA in the 30S particle. May play a critical role in biogenesis of 30S subunits. This chain is Ribosomal RNA small subunit methyltransferase A, found in Ehrlichia chaffeensis (strain ATCC CRL-10679 / Arkansas).